The sequence spans 332 residues: Beta-hexosaminidase (332 aa).

Substrate-binding positions include Asp62, Arg70, Arg131, and 161–162; that span reads KH. His174 (proton donor/acceptor) is an active-site residue. Residue Asp244 is the Nucleophile of the active site.

It belongs to the glycosyl hydrolase 3 family. NagZ subfamily.

It localises to the cytoplasm. It carries out the reaction Hydrolysis of terminal non-reducing N-acetyl-D-hexosamine residues in N-acetyl-beta-D-hexosaminides.. It functions in the pathway cell wall biogenesis; peptidoglycan recycling. In terms of biological role, plays a role in peptidoglycan recycling by cleaving the terminal beta-1,4-linked N-acetylglucosamine (GlcNAc) from peptide-linked peptidoglycan fragments, giving rise to free GlcNAc, anhydro-N-acetylmuramic acid and anhydro-N-acetylmuramic acid-linked peptides. The chain is Beta-hexosaminidase from Pseudomonas aeruginosa (strain LESB58).